The following is a 219-amino-acid chain: Putative protease Do-like 6, chloroplastic (219 aa).

Residues 1-45 (MLFRSVHHIVARFSNSTSTPIHRFFYSPSLLRRRSSFNASLISRC) constitute a chloroplast transit peptide. The interval 61 to 216 (KIFSFSREPN…YSGQINKKIY (156 aa)) is serine protease. Residues H99, D130, and S208 each act as charge relay system in the active site.

It belongs to the peptidase S1B family.

It is found in the plastid. It localises to the chloroplast. In terms of biological role, putative serine protease. This is Putative protease Do-like 6, chloroplastic (DEGP6) from Arabidopsis thaliana (Mouse-ear cress).